Consider the following 82-residue polypeptide: Small ribosomal subunit protein bS18 (82 aa).

This sequence belongs to the bacterial ribosomal protein bS18 family. Part of the 30S ribosomal subunit. Forms a tight heterodimer with protein bS6.

Functionally, binds as a heterodimer with protein bS6 to the central domain of the 16S rRNA, where it helps stabilize the platform of the 30S subunit. The polypeptide is Small ribosomal subunit protein bS18 (Bartonella bacilliformis (strain ATCC 35685 / KC583 / Herrer 020/F12,63)).